The primary structure comprises 316 residues: Transaldolase 2 (316 aa).

Lys131 serves as the catalytic Schiff-base intermediate with substrate.

This sequence belongs to the transaldolase family. Type 1 subfamily. In terms of assembly, homodimer.

It localises to the cytoplasm. The enzyme catalyses D-sedoheptulose 7-phosphate + D-glyceraldehyde 3-phosphate = D-erythrose 4-phosphate + beta-D-fructose 6-phosphate. Its pathway is carbohydrate degradation; pentose phosphate pathway; D-glyceraldehyde 3-phosphate and beta-D-fructose 6-phosphate from D-ribose 5-phosphate and D-xylulose 5-phosphate (non-oxidative stage): step 2/3. Transaldolase is important for the balance of metabolites in the pentose-phosphate pathway. The polypeptide is Transaldolase 2 (Shigella sonnei (strain Ss046)).